The chain runs to 307 residues: Putative flagellar export/assembly protein LafU (307 aa).

A helical membrane pass occupies residues 32-54 (AWKVAFADFTLAMMALFMTLWIV). Positions 87–108 (SPSHPPKPATVAAPEETEKKAR) are disordered. Residues 154 to 272 (LRVLIKDDQN…RIEIMVLTKS (119 aa)) form the OmpA-like domain.

The protein belongs to the MotB family.

The protein localises to the cell inner membrane. Part of the flagellar gene cluster Flag-2. However, the Flag-2 flagellar system could be inactive in strain 042 due to a frameshift in lfgC. This chain is Putative flagellar export/assembly protein LafU, found in Escherichia coli O44:H18 (strain 042 / EAEC).